Consider the following 481-residue polypeptide: UDP-N-acetylmuramoyl-L-alanyl-D-glutamate--L-lysine ligase (481 aa).

Ser42 provides a ligand contact to UDP-N-acetyl-alpha-D-muramoyl-L-alanyl-D-glutamate. Residue 118 to 124 participates in ATP binding; sequence GTKGKTT. Residues 160–161, Ser187, and Arg195 contribute to the UDP-N-acetyl-alpha-D-muramoyl-L-alanyl-D-glutamate site; that span reads TT. Position 229 is an N6-carboxylysine (Lys229). The L-lysine recognition motif motif lies at 404-407; it reads DDPN.

This sequence belongs to the MurCDEF family. MurE subfamily. Post-translationally, carboxylation is probably crucial for Mg(2+) binding and, consequently, for the gamma-phosphate positioning of ATP.

The protein resides in the cytoplasm. It carries out the reaction UDP-N-acetyl-alpha-D-muramoyl-L-alanyl-D-glutamate + L-lysine + ATP = UDP-N-acetyl-alpha-D-muramoyl-L-alanyl-gamma-D-glutamyl-L-lysine + ADP + phosphate + H(+). It participates in cell wall biogenesis; peptidoglycan biosynthesis. Catalyzes the addition of L-lysine to the nucleotide precursor UDP-N-acetylmuramoyl-L-alanyl-D-glutamate (UMAG) in the biosynthesis of bacterial cell-wall peptidoglycan. The sequence is that of UDP-N-acetylmuramoyl-L-alanyl-D-glutamate--L-lysine ligase from Streptococcus sanguinis (strain SK36).